We begin with the raw amino-acid sequence, 151 residues long: 3-hydroxyacyl-[acyl-carrier-protein] dehydratase FabZ (151 aa).

The active site involves His-54.

This sequence belongs to the thioester dehydratase family. FabZ subfamily.

It localises to the cytoplasm. It carries out the reaction a (3R)-hydroxyacyl-[ACP] = a (2E)-enoyl-[ACP] + H2O. Involved in unsaturated fatty acids biosynthesis. Catalyzes the dehydration of short chain beta-hydroxyacyl-ACPs and long chain saturated and unsaturated beta-hydroxyacyl-ACPs. In Klebsiella pneumoniae (strain 342), this protein is 3-hydroxyacyl-[acyl-carrier-protein] dehydratase FabZ.